The primary structure comprises 406 residues: Nicotinate phosphoribosyltransferase (406 aa).

H226 carries the phosphohistidine; by autocatalysis modification.

Belongs to the NAPRTase family. Transiently phosphorylated on a His residue during the reaction cycle. Phosphorylation strongly increases the affinity for substrates and increases the rate of nicotinate D-ribonucleotide production. Dephosphorylation regenerates the low-affinity form of the enzyme, leading to product release.

The catalysed reaction is nicotinate + 5-phospho-alpha-D-ribose 1-diphosphate + ATP + H2O = nicotinate beta-D-ribonucleotide + ADP + phosphate + diphosphate. Its pathway is cofactor biosynthesis; NAD(+) biosynthesis; nicotinate D-ribonucleotide from nicotinate: step 1/1. Functionally, catalyzes the synthesis of beta-nicotinate D-ribonucleotide from nicotinate and 5-phospho-D-ribose 1-phosphate at the expense of ATP. The sequence is that of Nicotinate phosphoribosyltransferase from Verminephrobacter eiseniae (strain EF01-2).